The chain runs to 235 residues: Post-translational flagellin modification protein B (235 aa).

It belongs to the CMP-NeuNAc synthase family.

Functionally, required for biosynthesis of LAH modification in the post-translational modification of Campylobacter coli flagellin. The chain is Post-translational flagellin modification protein B (ptmB) from Campylobacter coli.